A 209-amino-acid chain; its full sequence is C-type lectin domain family 6 member A (209 aa).

Topologically, residues 1–20 (MMQEQQPQSTEKRGWLSLRL) are cytoplasmic. Residues 21 to 41 (WSVAGISIALLSACFIVSCVV) form a helical; Signal-anchor for type II membrane protein membrane-spanning segment. Residues 42-209 (TYHFTYGETG…SICEMNKIYL (168 aa)) lie on the Extracellular side of the membrane. Cystine bridges form between Cys-66/Cys-78, Cys-79/Cys-90, Cys-107/Cys-202, and Cys-176/Cys-194. The C-type lectin domain maps to 86–203 (FGSSCYFISS…CETRRNSICE (118 aa)). 3 residues coordinate Ca(2+): Val-116, Asn-118, and Glu-122. N-linked (GlcNAc...) asparagine glycosylation occurs at Asn-131. The Ca(2+) site is built by Glu-168, Asn-170, and Glu-174. Alpha-D-mannopyranose contacts are provided by residues 168-170 (EPN), Glu-174, Trp-182, 190-191 (ND), and Arg-198. N-linked (GlcNAc...) asparagine glycosylation is present at Asn-170. Ca(2+)-binding residues include Asn-190 and Asp-191. Position 203 (Glu-203) interacts with Ca(2+).

As to quaternary structure, associated with FCER1G. Heterodimer with CLEC4D; this heterodimer forms a pattern recognition receptor (PRR) against fungal infection. Expressed in lung, spleen, lymph node, leukocytes, bone marrow, tonsils and dendritic cells. Strongly expressed in purified monocytes and weakly in B-cells. In peripheral blood cells, preferentially expressed in plasmacytoids rather than myeloids.

The protein resides in the cell membrane. Functionally, calcium-dependent lectin that acts as a pattern recognition receptor (PRR) of the innate immune system: specifically recognizes and binds alpha-mannans on C.albicans hypheas. Binding of C.albicans alpha-mannans to this receptor complex leads to phosphorylation of the immunoreceptor tyrosine-based activation motif (ITAM) of FCER1G, triggering activation of SYK, CARD9 and NF-kappa-B, consequently driving maturation of antigen-presenting cells and shaping antigen-specific priming of T-cells toward effector T-helper 1 and T-helper 17 cell subtypes. Recognizes also, in a mannose-dependent manner, allergens from house dust mite and fungi, by promoting cysteinyl leukotriene production. Recognizes soluble elements from the eggs of Shistosoma mansoni altering adaptive immune responses. This is C-type lectin domain family 6 member A from Homo sapiens (Human).